A 259-amino-acid polypeptide reads, in one-letter code: Hydroxyacylglutathione hydrolase (259 aa).

Zn(2+)-binding residues include histidine 56, histidine 58, aspartate 60, histidine 61, histidine 112, aspartate 133, and histidine 171.

Belongs to the metallo-beta-lactamase superfamily. Glyoxalase II family. As to quaternary structure, monomer. Zn(2+) is required as a cofactor.

The enzyme catalyses an S-(2-hydroxyacyl)glutathione + H2O = a 2-hydroxy carboxylate + glutathione + H(+). It participates in secondary metabolite metabolism; methylglyoxal degradation; (R)-lactate from methylglyoxal: step 2/2. Its function is as follows. Thiolesterase that catalyzes the hydrolysis of S-D-lactoyl-glutathione to form glutathione and D-lactic acid. The protein is Hydroxyacylglutathione hydrolase of Pseudomonas putida (strain ATCC 700007 / DSM 6899 / JCM 31910 / BCRC 17059 / LMG 24140 / F1).